We begin with the raw amino-acid sequence, 474 residues long: Lipoprotein lipase (474 aa).

The signal sequence occupies residues 1–27; that stretch reads MESKALLLVVLGVWLQSLTAFRGGVAA. The interval 32-53 is interaction with GPIHBP1; sequence RDFSDIESKFALRTPEDTAEDT. A disulfide bridge connects residues Cys-54 and Cys-67. A glycan (N-linked (GlcNAc...) asparagine) is linked at Asn-70. Tyr-121 is modified (3'-nitrotyrosine). Ser-159 functions as the Nucleophile in the catalytic mechanism. Residue Asp-183 is the Charge relay system of the active site. At Tyr-191 the chain carries 3'-nitrotyrosine. Positions 194, 197, 199, and 202 each coordinate Ca(2+). Cys-243 and Cys-266 are oxidised to a cystine. The tract at residues 243–266 is essential for determining substrate specificity; that stretch reads CNIGEAIRVIAERGLGDVDQLVKC. His-268 acts as the Charge relay system in catalysis. Intrachain disulfides connect Cys-291/Cys-310 and Cys-302/Cys-305. Positions 341-464 constitute a PLAT domain; sequence FHYQVKIHFS…KGKDSAVFVK (124 aa). Tyr-343 carries the post-translational modification 3'-nitrotyrosine. Residue Asn-386 is glycosylated (N-linked (GlcNAc...) asparagine). Residues 417-421 form an important for interaction with lipoprotein particles region; sequence WPDWW. The segment at 430-434 is important for heparin binding; sequence RIRVK. Positions 443 to 467 are interaction with GPIHBP1; it reads IFCAREKVSHLQKGKDSAVFVKCHD. An intrachain disulfide couples Cys-445 to Cys-465.

The protein belongs to the AB hydrolase superfamily. Lipase family. In terms of assembly, homodimer. Interacts with GPIHBP1 with 1:1 stoichiometry. Interacts with APOC2; the interaction activates LPL activity in the presence of lipids. Interaction with heparan sulfate proteoglycans is required to protect LPL against loss of activity. Associates with lipoprotein particles in blood plasma. Interacts with LMF1 and SEL1L; interaction with SEL1L is required to prevent aggregation of newly synthesized LPL in the endoplasmic reticulum (ER), and for normal export of LPL from the ER to the extracellular space. Interacts with SORL1; SORL1 acts as a sorting receptor, promoting LPL localization to endosomes and later to lysosomes, leading to degradation of newly synthesized LPL. Tyrosine nitration after lipopolysaccharide (LPS) challenge down-regulates the lipase activity. In terms of processing, N-glycosylated. Detected in white and brown adipose tissue and heart muscle, especially at the lumenal surface of capillaries. Detected on capillary endothelium in the lactating mammary gland. Detected in blood plasma (at protein level). Expressed in liver, epididymal fat, heart, psoas muscle, lactating mammary gland, adrenal, lung, and ovary. Highest levels in heart and adrenal gland.

It is found in the cell membrane. The protein resides in the secreted. The protein localises to the extracellular space. Its subcellular location is the extracellular matrix. It carries out the reaction a triacylglycerol + H2O = a diacylglycerol + a fatty acid + H(+). The enzyme catalyses a 1,2-diacyl-sn-glycero-3-phosphocholine + H2O = a 2-acyl-sn-glycero-3-phosphocholine + a fatty acid + H(+). It catalyses the reaction 1,2,3-tri-(9Z-octadecenoyl)-glycerol + H2O = di-(9Z)-octadecenoylglycerol + (9Z)-octadecenoate + H(+). The catalysed reaction is 1,2-di-(9Z-octadecenoyl)-sn-glycero-3-phosphocholine + H2O = (9Z-octadecenoyl)-sn-glycero-3-phosphocholine + (9Z)-octadecenoate + H(+). It carries out the reaction 1,2,3-tributanoylglycerol + H2O = dibutanoylglycerol + butanoate + H(+). The enzyme catalyses 1,2-dihexadecanoyl-sn-glycero-3-phosphocholine + H2O = hexadecanoyl-sn-glycero-3-phosphocholine + hexadecanoate + H(+). Its activity is regulated as follows. The apolipoprotein APOC2 acts as a coactivator of LPL activity. Ca(2+) binding promotes protein stability and formation of the active homodimer. Interaction with GPIHBP1 protects LPL against inactivation by ANGPTL4. Key enzyme in triglyceride metabolism. Catalyzes the hydrolysis of triglycerides from circulating chylomicrons and very low density lipoproteins (VLDL), and thereby plays an important role in lipid clearance from the blood stream, lipid utilization and storage. Although it has both phospholipase and triglyceride lipase activities it is primarily a triglyceride lipase with low but detectable phospholipase activity. Mediates margination of triglyceride-rich lipoprotein particles in capillaries. Recruited to its site of action on vascular endothelium by binding to GPIHBP1 and cell surface heparan sulfate proteoglycans. In Mus musculus (Mouse), this protein is Lipoprotein lipase (Lpl).